The sequence spans 216 residues: Peroxiredoxin (216 aa).

A Thioredoxin domain is found at 2–158; that stretch reads VVIGEKFPEV…ILRLVKALKV (157 aa). Cys46 functions as the Cysteine sulfenic acid (-SOH) intermediate in the catalytic mechanism. Residue Arg121 coordinates substrate. A disulfide bridge links Cys205 with Cys211.

Belongs to the peroxiredoxin family. Prx6 subfamily. As to quaternary structure, homodecamer. Pentamer of dimers that assemble into a ring structure.

The protein localises to the cytoplasm. It catalyses the reaction a hydroperoxide + [thioredoxin]-dithiol = an alcohol + [thioredoxin]-disulfide + H2O. Its function is as follows. Thiol-specific peroxidase that catalyzes the reduction of hydrogen peroxide and organic hydroperoxides to water and alcohols, respectively. Plays a role in cell protection against oxidative stress by detoxifying peroxides. The protein is Peroxiredoxin of Thermococcus kodakarensis (strain ATCC BAA-918 / JCM 12380 / KOD1) (Pyrococcus kodakaraensis (strain KOD1)).